We begin with the raw amino-acid sequence, 99 residues long: Large ribosomal subunit protein uL23 (99 aa).

Belongs to the universal ribosomal protein uL23 family. As to quaternary structure, part of the 50S ribosomal subunit. Contacts protein L29, and trigger factor when it is bound to the ribosome.

Functionally, one of the early assembly proteins it binds 23S rRNA. One of the proteins that surrounds the polypeptide exit tunnel on the outside of the ribosome. Forms the main docking site for trigger factor binding to the ribosome. This is Large ribosomal subunit protein uL23 from Alkalilimnicola ehrlichii (strain ATCC BAA-1101 / DSM 17681 / MLHE-1).